An 897-amino-acid chain; its full sequence is MPKVLFQKYKKVVSNIDPSRYSAKFKEIDEQRRSQGSESDFADEMEGEFEAEMEEMGSSEFSLSEGEPSLNIGKIDLSFPETVEEFENSPQCYPPSYYTLSPKERLLLLYAENFRKQLVLSYPKRRAMVLALPNECKVQKFVCTTIRPTAFIYTQLISSVEEIAKFVADFIQYEPLQDPINLPNRLISPETLLRKRKGNSYEMATLLVSMLIGAGHPALVVSGVAREETILNDQLAVPYPYPIVEVEVEEVKPKVEKPGQKYKLRGLPDLKSHLEEDMAEVHRQKEAEEKRIQDEIIRKQMEDLELLAVDRYHYRRSHAWVVIINNAPWSVKPKTTYTDVNGDVVEAPPTAIFIEPSTGFICETGCKQYILVDSIWNEYNYYVCKQKHQRVSELRWDLRDTKDWEHMLPGEPPEMRIYKMASDENVADEERDISEEKHLDCIGSWVERLHIGLADFEQRFPSSEKKIQYKGAIHERFSPYSQRDGKVMQLTIFNNDECTIPKVRYEYYENRSDLMRHVKYTYATDQFEEIFNKGRNDSLKSIEYFSDPSQQRKVHFFSASRIDSLELMVVEPGSLILHYKDRSDKCWYKEFEFTPAGNVLKKVTEKFLKASANDVCSNDIATRTFLFQQNKIVLKFHYTFGALTATVVEFTKPPRPDYGKELIYDEKLTKIYKANPLDPTRTNLELYRLLCEQLQYEDHLRKNFEKIFEDINNVFDLRKSEKAEPKLKFSIFDPLRNGAARAIRMRQFEEEEELKKEIASKPADFLAPYLVPYKHQEELTPEQSQNAYNACLNDLKSRFVSLLNNLQRHYEDLTSESKSLNRFLNKFENQFNNYDYKRLVQQSKDLELNKRMVQQRLTLTHEESQKKYEVVKNSLLKDPRLNFKKDDLARRASETSK.

The disordered stretch occupies residues 27–49 (EIDEQRRSQGSESDFADEMEGEF). Residues 40–49 (DFADEMEGEF) are compositionally biased toward acidic residues. Coiled-coil stretches lie at residues 269–306 (DLKS…DLEL) and 801–858 (SLLN…QRLT).

The protein belongs to the DRC7 family. As to expression, testis-specific (at protein level).

The protein localises to the cell projection. It localises to the cilium. Its subcellular location is the flagellum. It is found in the cytoplasm. The protein resides in the cytoskeleton. The protein localises to the cilium axoneme. Key component of the nexin-dynein regulatory complex (N-DRC), essential for N-DRC integrity. Involved in the regulation of flagellar motility. Involved in sperm motility. Required for the sperm to enter in the coiled storage seminal receptacle (SR) tubule. This Drosophila melanogaster (Fruit fly) protein is Coiled-coil domain-containing protein lobo (lobo).